The chain runs to 720 residues: DNA replication licensing factor mcm7-B (720 aa).

The C4-type zinc finger occupies 183 to 210 (CDQCGAETYQPIQSPTFMPLIMCPSREC). Residues 331-537 (FYEKLAASIA…NDLRLAQHIT (207 aa)) form the MCM domain. ATP is bound by residues Tyr344, Gly383, Ala385, Lys386, Ser387, Asn488, Arg513, and Arg603. Residues 512–515 (SRFD) carry the Arginine finger motif.

This sequence belongs to the MCM family. As to quaternary structure, component of the mcm2-7 complex (RLF-M). The complex forms a toroidal hexameric ring with the proposed subunit order mcm2-mcm6-mcm4-mcm7-mcm3-mcm5. The heterodimer of mmcm3/mcm5 interacts with mcm4, mmcm6, mcm7 and weakly with mcm2. The N-terminus is required for interaction with mmcm3, though this interaction may not be direct, and remains in a complex with mmcm3 throughout the cell cycle. Begins to associate with zmcm6 at the neurula stage. Component of the replisome complex. Component of the CMG helicase complex, composed of the mcm2-7 complex, the GINS complex and cdc45. In terms of processing, ubiquitinated by traip when forks converge following formation of DNA interstrand cross-links. Short ubiquitin chains on mcm7 promote recruitment of DNA glycosylase neil3. If the interstrand cross-link cannot be cleaved by neil3, the ubiquitin chains continue to grow on mcm7, promoting the unloading of the CMG helicase complex by the vcp/p97 ATPase.

The protein resides in the nucleus. It localises to the chromosome. The enzyme catalyses ATP + H2O = ADP + phosphate + H(+). Functionally, acts as a component of the mcm2-7 complex (mcm complex) which is the putative replicative helicase essential for 'once per cell cycle' DNA replication initiation and elongation in eukaryotic cells. The active ATPase sites in the mcm2-7 ring are formed through the interaction surfaces of two neighboring subunits such that a critical structure of a conserved arginine finger motif is provided in trans relative to the ATP-binding site of the Walker A box of the adjacent subunit. The six ATPase active sites, however, are likely to contribute differentially to the complex helicase activity. The existence of maternal and zygotic forms of mcm3 and mcm6 suggests that specific forms of mcm2-7 complexes may be used during different stages of development. This chain is DNA replication licensing factor mcm7-B (mcm7-b), found in Xenopus laevis (African clawed frog).